Reading from the N-terminus, the 313-residue chain is Vacuolar membrane protein ZYRO0A01628g (313 aa).

Low complexity predominate over residues 22 to 37; the sequence is SASKTSSHTSKTSYSA. A disordered region spans residues 22 to 48; it reads SASKTSSHTSKTSYSAVVTPPSSDGNP. The helical transmembrane segment at 59–79 threads the bilayer; the sequence is GLIYIIVGGTAAAIFAFIILW. The segment covering 221–234 has biased composition (low complexity); that stretch reads TSLPSASESSSNLL. Positions 221–313 are disordered; that stretch reads TSLPSASESS…LLEGNDDGTT (93 aa). The segment covering 235–247 has biased composition (basic and acidic residues); the sequence is DRPERTASPERKP. Over residues 248–257 the composition is skewed to basic residues; that stretch reads KAYGRYHQRN. Residues 285–301 are compositionally biased toward polar residues; the sequence is NVNNNNKKHGTTPSRFL.

Belongs to the PRM5 family.

It is found in the vacuole membrane. The protein is Vacuolar membrane protein ZYRO0A01628g of Zygosaccharomyces rouxii (strain ATCC 2623 / CBS 732 / NBRC 1130 / NCYC 568 / NRRL Y-229).